We begin with the raw amino-acid sequence, 264 residues long: Diphthine synthase (264 aa).

Residues leucine 9, aspartate 84, valine 87, serine 112–isoleucine 113, leucine 164, alanine 207, and histidine 232 contribute to the S-adenosyl-L-methionine site.

This sequence belongs to the diphthine synthase family. As to quaternary structure, homodimer.

It carries out the reaction 2-[(3S)-amino-3-carboxypropyl]-L-histidyl-[translation elongation factor 2] + 3 S-adenosyl-L-methionine = diphthine-[translation elongation factor 2] + 3 S-adenosyl-L-homocysteine + 3 H(+). It functions in the pathway protein modification; peptidyl-diphthamide biosynthesis. Functionally, S-adenosyl-L-methionine-dependent methyltransferase that catalyzes the trimethylation of the amino group of the modified target histidine residue in translation elongation factor 2 (EF-2), to form an intermediate called diphthine. The three successive methylation reactions represent the second step of diphthamide biosynthesis. In Methanothermobacter thermautotrophicus (strain ATCC 29096 / DSM 1053 / JCM 10044 / NBRC 100330 / Delta H) (Methanobacterium thermoautotrophicum), this protein is Diphthine synthase.